Consider the following 250-residue polypeptide: Eukaryotic translation initiation factor 2 subunit 2 (250 aa).

The segment at 193 to 217 adopts a C4-type zinc-finger fold; sequence CHTCKSPETQLTKDTRLFFLQCTNC.

The protein belongs to the eIF-2-beta/eIF-5 family. Eukaryotic translation initiation factor 2 eIF2 is a heterotrimeric complex composed of an alpha, a beta and a gamma subunit.

The protein localises to the cytoplasm. The protein resides in the cytosol. Its function is as follows. Component of the eIF2 complex that functions in the early steps of protein synthesis by forming a ternary complex with GTP and initiator tRNA. This complex binds to a 40S ribosomal subunit, followed by mRNA binding to form a 43S pre-initiation complex (43S PIC). Junction of the 60S ribosomal subunit to form the 80S initiation complex is preceded by hydrolysis of the GTP bound to eIF2 and release of an eIF2-GDP binary complex. In order for eIF2 to recycle and catalyze another round of initiation, the GDP bound to eIF2 must exchange with GTP by way of a reaction catalyzed by eIF2B. In Caenorhabditis elegans, this protein is Eukaryotic translation initiation factor 2 subunit 2.